We begin with the raw amino-acid sequence, 741 residues long: Condensin complex subunit 2 (741 aa).

The segment at 1-67 is disordered; the sequence is MGPPGPALPA…NDDEKERLQR (67 aa). Phosphoserine is present on residues serine 15, serine 25, and serine 28. Threonine 49 bears the Phosphothreonine mark. Phosphoserine occurs at positions 70, 78, 81, 87, 89, 92, 96, 201, and 233. Acidic residues predominate over residues 361–377; it reads CGDFPDGSLGDDFDAND. Positions 361–383 are disordered; that stretch reads CGDFPDGSLGDDFDANDEPDHTA. At serine 432 the chain carries Phosphoserine. Residues 447–467 form a disordered region; the sequence is FRPRRKQDAPSQSENKKKSTK. Lysine 488 participates in a covalent cross-link: Glycyl lysine isopeptide (Lys-Gly) (interchain with G-Cter in SUMO2). Serine 496 carries the phosphoserine modification. A phosphothreonine mark is found at threonine 598 and threonine 605. Lysine 637 carries the post-translational modification N6-acetyllysine.

This sequence belongs to the CND2 (condensin subunit 2) family. Component of the condensin complex, which contains the SMC2 and SMC4 heterodimer, and three non SMC subunits that probably regulate the complex: NCAPH/BRRN1, NCAPD2/CAPD2 and NCAPG. Post-translationally, phosphorylated by CDK1. Its phosphorylation, as well as that of NCAPD2 and NCAPG subunits, activates the condensin complex and is required for chromosome condensation. Widely expressed at low level. Expressed in proliferating cells.

The protein localises to the nucleus. It localises to the cytoplasm. The protein resides in the chromosome. In terms of biological role, regulatory subunit of the condensin complex, a complex required for conversion of interphase chromatin into mitotic-like condense chromosomes. The condensin complex probably introduces positive supercoils into relaxed DNA in the presence of type I topoisomerases and converts nicked DNA into positive knotted forms in the presence of type II topoisomerases. Early in neurogenesis, may play an essential role to ensure accurate mitotic chromosome condensation in neuron stem cells, ultimately affecting neuron pool and cortex size. This Homo sapiens (Human) protein is Condensin complex subunit 2.